The sequence spans 397 residues: MTERVVLAYSGGLDTSVAIGWIAEETGAEVIAVAVDVGQGGEDLDVIRKRALACGAVEAEVADARDEFAEEYCLPAIKANALYMDRYPLVSALSRPTIVKHLVAAARKHGAGTVAHGCTGKGNDQVRFEAGISALGPDLKCIAPVRDYAMTRDRAIAFCEEKNLPIATTRKSPYSIDQNVFGRAVETGFLEDIWNAPIEDIYEYTADPAVPREADEVVISFKEGVPVAVDGRPVTVLQAIQQLNERAGAQGVGRIDMVEDRLVGIKSREVYEAPGAIALITAHQELENVTVERELARYKRQVEQRWGEMVYDGLWFSPLKRALDGFINEANQHVTGDIRMTLHAGRAVVTGRKSEESLYDFNLATYDSGDTFDQSKAQGFIEIFGLSAKIAARRDLA.

8–16 (AYSGGLDTS) contributes to the ATP binding site. Tyr87 serves as a coordination point for L-citrulline. Gly117 contacts ATP. Positions 119, 123, and 124 each coordinate L-aspartate. Asn123 is an L-citrulline binding site. L-citrulline-binding residues include Arg127, Ser175, Glu259, and Tyr271.

Belongs to the argininosuccinate synthase family. Type 1 subfamily. In terms of assembly, homotetramer.

Its subcellular location is the cytoplasm. It catalyses the reaction L-citrulline + L-aspartate + ATP = 2-(N(omega)-L-arginino)succinate + AMP + diphosphate + H(+). The protein operates within amino-acid biosynthesis; L-arginine biosynthesis; L-arginine from L-ornithine and carbamoyl phosphate: step 2/3. In Streptomyces griseus subsp. griseus (strain JCM 4626 / CBS 651.72 / NBRC 13350 / KCC S-0626 / ISP 5235), this protein is Argininosuccinate synthase.